Consider the following 276-residue polypeptide: Undecaprenyl-diphosphatase (276 aa).

8 helical membrane-spanning segments follow: residues 1–21 (MHWL…FLPV), 41–61 (LLLD…VFFA), 97–117 (ALLI…FHKI), 121–141 (LFAS…LLWA), 155–175 (VTWG…LPGI), 200–220 (FLLS…DASA), 231–251 (LGGI…LAIV), and 256–276 (LWWF…ANFV).

The protein belongs to the UppP family.

It is found in the cell inner membrane. It carries out the reaction di-trans,octa-cis-undecaprenyl diphosphate + H2O = di-trans,octa-cis-undecaprenyl phosphate + phosphate + H(+). Catalyzes the dephosphorylation of undecaprenyl diphosphate (UPP). Confers resistance to bacitracin. The chain is Undecaprenyl-diphosphatase from Desulfatibacillum aliphaticivorans.